The following is a 367-amino-acid chain: Apolipoprotein A-V (367 aa).

A signal peptide spans 1–20; that stretch reads MVAVLTWALALLSAFATAQT. Serine 56 bears the Phosphoserine mark.

This sequence belongs to the apolipoprotein A1/A4/E family. Interacts with GPIHBP1. Interacts with SORL1; this interaction leads to APOA5 internalization and sorting either to lysosomes and degradation, or to the trans-Golgi network. Phosphorylated by FAM20C in the extracellular medium.

Its subcellular location is the secreted. It is found in the early endosome. The protein localises to the late endosome. It localises to the golgi apparatus. The protein resides in the trans-Golgi network. In terms of biological role, minor apolipoprotein mainly associated with HDL and to a lesser extent with VLDL. May also be associated with chylomicrons. Important determinant of plasma triglyceride (TG) levels by both being a potent stimulator of apo-CII lipoprotein lipase (LPL) TG hydrolysis and an inhibitor of the hepatic VLDL-TG production rate (without affecting the VLDL-apoB production rate). Activates poorly lecithin:cholesterol acyltransferase (LCAT) and does not enhance efflux of cholesterol from macrophages. Binds heparin. The sequence is that of Apolipoprotein A-V (APOA5) from Phoca vitulina (Harbor seal).